The primary structure comprises 228 residues: Ribose-5-phosphate isomerase A (228 aa).

Residues 32–35 (TGST), 85–88 (DGAD), and 98–101 (KGGG) contribute to the substrate site. Glutamate 107 functions as the Proton acceptor in the catalytic mechanism. Substrate is bound at residue lysine 125.

Belongs to the ribose 5-phosphate isomerase family. As to quaternary structure, homodimer.

The enzyme catalyses aldehydo-D-ribose 5-phosphate = D-ribulose 5-phosphate. It participates in carbohydrate degradation; pentose phosphate pathway; D-ribose 5-phosphate from D-ribulose 5-phosphate (non-oxidative stage): step 1/1. Its function is as follows. Catalyzes the reversible conversion of ribose-5-phosphate to ribulose 5-phosphate. The chain is Ribose-5-phosphate isomerase A from Ralstonia nicotianae (strain ATCC BAA-1114 / GMI1000) (Ralstonia solanacearum).